A 66-amino-acid polypeptide reads, in one-letter code: Large ribosomal subunit protein uL29 (66 aa).

It belongs to the universal ribosomal protein uL29 family.

The polypeptide is Large ribosomal subunit protein uL29 (Caldanaerobacter subterraneus subsp. tengcongensis (strain DSM 15242 / JCM 11007 / NBRC 100824 / MB4) (Thermoanaerobacter tengcongensis)).